The chain runs to 67 residues: Moricin (67 aa).

An N-terminal signal peptide occupies residues 1–23; sequence MKLTSLFIFVIVALSLLFSSTDA.

This sequence belongs to the moricin family. As to quaternary structure, monomer.

It is found in the secreted. Antimicrobial peptide. Active against a broad spectrum of Gram-positive and Gram-negative bacteria including methicillin-resistant S.aureus ATCC 43 300, S.aureus BAA-39, pathogenic strains of L.monocytogenes, K.pneumoniae, E.coli O157:H7, S.typhimurium and multidrug-resistant S.typhimurium DT104 with minimum inhibitory concentration (MIC) of 1.4 uM for all except for S.aureus BAA-39. Also active against Serratia marcescens. Probably acts by disturbing membrane functions with its amphipathic alpha-helical structure. May protect a developing embryo from bacterial infection. The protein is Moricin of Manduca sexta (Tobacco hawkmoth).